A 490-amino-acid polypeptide reads, in one-letter code: Protein nucleotidyltransferase YdiU (490 aa).

8 residues coordinate ATP: Gly-86, Gly-88, Arg-89, Lys-109, Asp-121, Gly-122, Arg-172, and Arg-179. Asp-248 acts as the Proton acceptor in catalysis. 2 residues coordinate Mg(2+): Asn-249 and Asp-258. Residue Asp-258 coordinates ATP.

Belongs to the SELO family. Requires Mg(2+) as cofactor. It depends on Mn(2+) as a cofactor.

It catalyses the reaction L-seryl-[protein] + ATP = 3-O-(5'-adenylyl)-L-seryl-[protein] + diphosphate. It carries out the reaction L-threonyl-[protein] + ATP = 3-O-(5'-adenylyl)-L-threonyl-[protein] + diphosphate. The enzyme catalyses L-tyrosyl-[protein] + ATP = O-(5'-adenylyl)-L-tyrosyl-[protein] + diphosphate. The catalysed reaction is L-histidyl-[protein] + UTP = N(tele)-(5'-uridylyl)-L-histidyl-[protein] + diphosphate. It catalyses the reaction L-seryl-[protein] + UTP = O-(5'-uridylyl)-L-seryl-[protein] + diphosphate. It carries out the reaction L-tyrosyl-[protein] + UTP = O-(5'-uridylyl)-L-tyrosyl-[protein] + diphosphate. Its function is as follows. Nucleotidyltransferase involved in the post-translational modification of proteins. It can catalyze the addition of adenosine monophosphate (AMP) or uridine monophosphate (UMP) to a protein, resulting in modifications known as AMPylation and UMPylation. In Rhizobium meliloti (strain 1021) (Ensifer meliloti), this protein is Protein nucleotidyltransferase YdiU.